Consider the following 367-residue polypeptide: Alanine racemase (367 aa).

Residue Lys40 is the Proton acceptor; specific for D-alanine of the active site. Lys40 carries the N6-(pyridoxal phosphate)lysine modification. Position 136 (Arg136) interacts with substrate. Tyr263 acts as the Proton acceptor; specific for L-alanine in catalysis. Met310 serves as a coordination point for substrate.

Belongs to the alanine racemase family. Pyridoxal 5'-phosphate serves as cofactor.

The enzyme catalyses L-alanine = D-alanine. It functions in the pathway amino-acid biosynthesis; D-alanine biosynthesis; D-alanine from L-alanine: step 1/1. Its function is as follows. Catalyzes the interconversion of L-alanine and D-alanine. May also act on other amino acids. The protein is Alanine racemase (alr) of Streptococcus pneumoniae serotype 19F (strain G54).